The following is a 181-amino-acid chain: Der GTPase-activating protein YihI (181 aa).

2 disordered regions span residues 1–75 and 145–181; these read MSRK…KKIP and EPEA…DYKG. Residues 32-43 show a composition bias toward basic residues; sequence RLRKKDKKRKGL. The span at 146–155 shows a compositional bias: acidic residues; it reads PEAEEEFEEE. A compositionally biased stretch (basic and acidic residues) spans 156–165; the sequence is APVRKSRSDD. Positions 166 to 181 are enriched in acidic residues; that stretch reads DLLADFEDFDMDDYKG.

It belongs to the YihI family. As to quaternary structure, interacts with Der.

In terms of biological role, a GTPase-activating protein (GAP) that modifies Der/EngA GTPase function. May play a role in ribosome biogenesis. This is Der GTPase-activating protein YihI from Vibrio vulnificus (strain CMCP6).